The primary structure comprises 580 residues: Formate--tetrahydrofolate ligase (580 aa).

83–90 (TPMGEGKT) provides a ligand contact to ATP.

Belongs to the formate--tetrahydrofolate ligase family.

The catalysed reaction is (6S)-5,6,7,8-tetrahydrofolate + formate + ATP = (6R)-10-formyltetrahydrofolate + ADP + phosphate. The protein operates within one-carbon metabolism; tetrahydrofolate interconversion. This Haloquadratum walsbyi (strain DSM 16790 / HBSQ001) protein is Formate--tetrahydrofolate ligase.